We begin with the raw amino-acid sequence, 118 residues long: Large ribosomal subunit protein bL20 (118 aa).

The protein belongs to the bacterial ribosomal protein bL20 family.

Functionally, binds directly to 23S ribosomal RNA and is necessary for the in vitro assembly process of the 50S ribosomal subunit. It is not involved in the protein synthesizing functions of that subunit. The protein is Large ribosomal subunit protein bL20 of Desulfovibrio desulfuricans (strain ATCC 27774 / DSM 6949 / MB).